We begin with the raw amino-acid sequence, 242 residues long: Ras-like protein family member 11A (242 aa).

Positions 17-241 (ESSSDYLLPK…SSKAKASSAL (225 aa)) are small GTPase-like. Residues 34–41 (GAGCVGKS), 81–88 (DTPGGIQA), and 147–150 (NKGD) contribute to the GTP site.

It belongs to the small GTPase superfamily. Ras family. In terms of assembly, interacts with UBF/UBTF.

Its subcellular location is the nucleus. It localises to the nucleolus. The catalysed reaction is GTP + H2O = GDP + phosphate + H(+). Regulator of rDNA transcription. Acts in cooperation UBF/UBTF and positively regulates RNA polymerase I transcription. This chain is Ras-like protein family member 11A, found in Mus musculus (Mouse).